The primary structure comprises 303 residues: Glycine--tRNA ligase alpha subunit (303 aa).

It belongs to the class-II aminoacyl-tRNA synthetase family. As to quaternary structure, tetramer of two alpha and two beta subunits.

It is found in the cytoplasm. The enzyme catalyses tRNA(Gly) + glycine + ATP = glycyl-tRNA(Gly) + AMP + diphosphate. In Enterobacter sp. (strain 638), this protein is Glycine--tRNA ligase alpha subunit.